A 567-amino-acid polypeptide reads, in one-letter code: Septation ring formation regulator EzrA (567 aa).

At 1–2 the chain is on the extracellular side; that stretch reads ME. Residues 3-21 form a helical membrane-spanning segment; that stretch reads FIIGLIVILLALFSVGYFL. At 22-567 the chain is on the cytoplasmic side; it reads RKNIYKEIDR…AQQEKEYQHQ (546 aa). 3 coiled-coil regions span residues 108 to 185, 243 to 375, and 402 to 529; these read IEDL…YEEE, KGYK…RDHV, and KGHL…ERRF.

Belongs to the EzrA family.

The protein localises to the cell membrane. Negative regulator of FtsZ ring formation; modulates the frequency and position of FtsZ ring formation. Inhibits FtsZ ring formation at polar sites. Interacts either with FtsZ or with one of its binding partners to promote depolymerization. In Bacillus pumilus (strain SAFR-032), this protein is Septation ring formation regulator EzrA.